A 1140-amino-acid chain; its full sequence is TBC1 domain family member 8 (1140 aa).

2 consecutive GRAM domains span residues 145-212 and 285-353; these read VKFE…ERTS and EFFR…EKME. Residues 505–692 form the Rab-GAP TBC domain; the sequence is GIPESLRGRL…NVVDCFFYDG (188 aa). The segment at 1031–1070 is disordered; it reads GQRGSSSGSCSQECGEELRASAPSPEDSVFADTGKTPQDS. Over residues 1032-1043 the composition is skewed to low complexity; it reads QRGSSSGSCSQE.

In terms of biological role, may act as a GTPase-activating protein for Rab family protein(s). This Homo sapiens (Human) protein is TBC1 domain family member 8 (TBC1D8).